Reading from the N-terminus, the 349-residue chain is DNA-directed RNA polymerase subunit Rpo1N (349 aa).

The interval 306-349 (EDEGEEFAGEQATNLSESADDRMDRDRPSSHGAAPIDVPEVGDD) is disordered. Positions 324-334 (ADDRMDRDRPS) are enriched in basic and acidic residues.

The protein belongs to the RNA polymerase beta' chain family. As to quaternary structure, part of the RNA polymerase complex.

It is found in the cytoplasm. It catalyses the reaction RNA(n) + a ribonucleoside 5'-triphosphate = RNA(n+1) + diphosphate. DNA-dependent RNA polymerase (RNAP) catalyzes the transcription of DNA into RNA using the four ribonucleoside triphosphates as substrates. Forms the clamp head domain. In Halococcus morrhuae (Micrococcus morrhuae), this protein is DNA-directed RNA polymerase subunit Rpo1N.